The chain runs to 177 residues: Nucleoside triphosphate/diphosphate phosphatase (177 aa).

Arg23 functions as the Proton donor in the catalytic mechanism. Mg(2+)-binding residues include Asn87, Asp103, Asp105, Asp107, Asp120, and Glu123.

The protein belongs to the Ntdp family. It depends on Mg(2+) as a cofactor.

It catalyses the reaction a ribonucleoside 5'-triphosphate + H2O = a ribonucleoside 5'-diphosphate + phosphate + H(+). It carries out the reaction a ribonucleoside 5'-diphosphate + H2O = a ribonucleoside 5'-phosphate + phosphate + H(+). Has nucleoside phosphatase activity towards nucleoside triphosphates and nucleoside diphosphates. The protein is Nucleoside triphosphate/diphosphate phosphatase of Streptococcus gordonii (strain Challis / ATCC 35105 / BCRC 15272 / CH1 / DL1 / V288).